An 843-amino-acid chain; its full sequence is Protein P (843 aa).

The interval 1-177 (MPLSYQHFRK…FCGSPYSWEQ (177 aa)) is terminal protein domain (TP). Positions 178 to 346 (ELQHGRLVLQ…HCLFHIVNLI (169 aa)) are spacer. 2 disordered regions span residues 221-240 (SRLG…QGGS) and 289-315 (VSTS…SRSQ). The segment covering 223 to 235 (LGPQPTQGQLAGL) has biased composition (low complexity). Residues 347-690 (DDWGPCAEHG…YLNLYPVARQ (344 aa)) are polymerase/reverse transcriptase domain (RT). The Reverse transcriptase domain maps to 357–600 (EHRIRTPRTP…YSLNFMGYVI (244 aa)). Mg(2+)-binding residues include D429, D551, and D552.

Belongs to the hepadnaviridae P protein family.

The catalysed reaction is DNA(n) + a 2'-deoxyribonucleoside 5'-triphosphate = DNA(n+1) + diphosphate. The enzyme catalyses Endonucleolytic cleavage to 5'-phosphomonoester.. Its activity is regulated as follows. Activated by host HSP70 and HSP40 in vitro to be able to bind the epsilon loop of the pgRNA. Because deletion of the RNase H region renders the protein partly chaperone-independent, the chaperones may be needed indirectly to relieve occlusion of the RNA-binding site by this domain. Inhibited by several reverse-transcriptase inhibitors: Lamivudine, Adefovir and Entecavir. Functionally, multifunctional enzyme that converts the viral RNA genome into dsDNA in viral cytoplasmic capsids. This enzyme displays a DNA polymerase activity that can copy either DNA or RNA templates, and a ribonuclease H (RNase H) activity that cleaves the RNA strand of RNA-DNA heteroduplexes in a partially processive 3'- to 5'-endonucleasic mode. Neo-synthesized pregenomic RNA (pgRNA) are encapsidated together with the P protein, and reverse-transcribed inside the nucleocapsid. Initiation of reverse-transcription occurs first by binding the epsilon loop on the pgRNA genome, and is initiated by protein priming, thereby the 5'-end of (-)DNA is covalently linked to P protein. Partial (+)DNA is synthesized from the (-)DNA template and generates the relaxed circular DNA (RC-DNA) genome. After budding and infection, the RC-DNA migrates in the nucleus, and is converted into a plasmid-like covalently closed circular DNA (cccDNA). The activity of P protein does not seem to be necessary for cccDNA generation, and is presumably released from (+)DNA by host nuclear DNA repair machinery. This chain is Protein P, found in Homo sapiens (Human).